The chain runs to 115 residues: Guanylin (115 aa).

Positions 1–23 are cleaved as a signal peptide; the sequence is MNAWLLSVLCLLGALAVLVEGVT. Positions 24–100 are excised as a propeptide; that stretch reads VQDGDLSFPL…LQRLEAIAQD (77 aa). Cystine bridges form between cysteine 69/cysteine 82, cysteine 104/cysteine 112, and cysteine 107/cysteine 115.

Belongs to the guanylin family. As to expression, intestine and in low abundance in adrenal gland, kidney, and uterus/oviduct.

Its subcellular location is the secreted. Its function is as follows. Endogenous activator of intestinal guanylate cyclase. It stimulates this enzyme through the same receptor binding region as the heat-stable enterotoxins. This chain is Guanylin (Guca2a), found in Rattus norvegicus (Rat).